The sequence spans 253 residues: Putative glutamine amidotransferase PB2B2.05 (253 aa).

A Glutamine amidotransferase type-1 domain is found at 5–228 (IIALSVGFSN…INRSKWHMKQ (224 aa)). Residue cysteine 100 is the Nucleophile of the active site. Catalysis depends on residues histidine 200 and glutamate 202.

It is found in the cytoplasm. It localises to the nucleus. This is Putative glutamine amidotransferase PB2B2.05 from Schizosaccharomyces pombe (strain 972 / ATCC 24843) (Fission yeast).